We begin with the raw amino-acid sequence, 220 residues long: Germin-like protein subfamily 2 member 4 (220 aa).

Residues 1–21 form the signal peptide; the sequence is MDSRCFGFFFTLLSLNVIVLA. Cysteine 31 and cysteine 46 are disulfide-bonded. N-linked (GlcNAc...) asparagine glycans are attached at residues asparagine 51 and asparagine 69. A Cupin type-1 domain is found at 58–209; it reads FFAGIGKPAV…TFQIGTKEIE (152 aa). 4 residues coordinate Mn(2+): histidine 108, histidine 110, glutamate 115, and histidine 154.

It belongs to the germin family. In terms of assembly, oligomer (believed to be a pentamer but probably hexamer).

Its subcellular location is the secreted. It is found in the extracellular space. The protein localises to the apoplast. Its function is as follows. May play a role in plant defense. Probably has no oxalate oxidase activity even if the active site is conserved. In Arabidopsis thaliana (Mouse-ear cress), this protein is Germin-like protein subfamily 2 member 4 (GLP10).